The chain runs to 257 residues: MTEQRMALVASPTTAAQEAATELRAIYEWHPIERADLVVALGGDGFMLRTLHAMLDRHRILPVFGMNLGTVGFLMNDWKPDLLELRLQQARAITVLPLRMDVETVEGQRHSVPAINEVSLLRETRETAKIEVLVDGRVVLPELVCDGVLVSTPAGSTAYNLSAQGPILPLESSLLALTPISPFRPRRWRGAILPNKNAISFRVLDAIKRPVSAVADQREVRDVSLIRVGIDKTSPLTLLFDPEHALDDRITMEQFAV.

The Proton acceptor role is filled by Asp44. NAD(+) contacts are provided by residues 44–45 (DG), Arg49, 116–117 (NE), Asp146, Ala154, and 157–162 (TAYNLS).

This sequence belongs to the NAD kinase family. The cofactor is a divalent metal cation.

The protein resides in the cytoplasm. The catalysed reaction is NAD(+) + ATP = ADP + NADP(+) + H(+). Functionally, involved in the regulation of the intracellular balance of NAD and NADP, and is a key enzyme in the biosynthesis of NADP. Catalyzes specifically the phosphorylation on 2'-hydroxyl of the adenosine moiety of NAD to yield NADP. This Rhizorhabdus wittichii (strain DSM 6014 / CCUG 31198 / JCM 15750 / NBRC 105917 / EY 4224 / RW1) (Sphingomonas wittichii) protein is NAD kinase.